The primary structure comprises 355 residues: Guanine nucleotide-binding protein alpha-12 subunit (355 aa).

In terms of domain architecture, G-alpha spans 28 to 355 (RQINLLLLGS…EQNLKTLMMQ (328 aa)). The segment at 31-44 (NLLLLGSGESGKST) is G1 motif. GTP-binding positions include 36-43 (GSGESGKS), 176-182 (LFCRKAT), 201-205 (DVGGQ), 270-273 (NKND), and alanine 327. Mg(2+) is bound by residues serine 43 and threonine 182. A G2 motif region spans residues 174–182 (DILFCRKAT). A G3 motif region spans residues 197-206 (FRFIDVGGQR). The G4 motif stretch occupies residues 266–273 (ILFMNKND). The G5 motif stretch occupies residues 325 to 330 (TTAVDT).

It belongs to the G-alpha family. As to quaternary structure, g proteins are composed of 3 units; alpha, beta and gamma. The alpha chain contains the guanine nucleotide binding site.

Guanine nucleotide-binding proteins (G proteins) are involved as modulators or transducers in various transmembrane signaling systems. May play a role in resistance to fungal infection in the epidermis by regulating the up-regulation of several antimicrobial peptides of the NLP and CNC families. Upstream of plc-3, egl-8, tpa-1 and the p38-like pathway, required for the expression of antimicrobial peptide nlp-29 in the epidermis in response to fungal infection or physical injury. This Caenorhabditis briggsae protein is Guanine nucleotide-binding protein alpha-12 subunit (gpa-12).